A 339-amino-acid polypeptide reads, in one-letter code: MAHVAEWKKKEVEELANLIKSYPVVALVDVSSMPAYPLSQMRRLIRENNGLLRVSRNTLIELAIKKVAQELGKPELEKLINYIEGGAGILVTTMNPFKLYKFLQQNRQPAPAKPGAKVPKDVVIPAGPTSLAPGPIVGQMQAMGIPARIERGKVTIQKDTVVLKAGEEITPELANILNALGIQPLEVGLDLLAVYEDGIIYTPDVLAIDESEYINMLQKAYMHAFNLAVNIAYPTPQTIEAIIQKAFLNAKAVAVEAGYITKETISDIIGRAIRAMLLLAQQLPEDVLDEKTKELLSAQAQVSVAQVEEEKKEEKVEEEKEDEEASEEEALAGLSALFG.

Positions 307–339 (VEEEKKEEKVEEEKEDEEASEEEALAGLSALFG) are disordered. A compositionally biased stretch (basic and acidic residues) spans 308-318 (EEEKKEEKVEE). Over residues 319-330 (EKEDEEASEEEA) the composition is skewed to acidic residues.

It belongs to the universal ribosomal protein uL10 family. As to quaternary structure, part of the 50S ribosomal subunit. Forms part of the ribosomal stalk which helps the ribosome interact with GTP-bound translation factors. Forms a heptameric L10(L12)2(L12)2(L12)2 complex, where L10 forms an elongated spine to which the L12 dimers bind in a sequential fashion.

Functionally, forms part of the ribosomal stalk, playing a central role in the interaction of the ribosome with GTP-bound translation factors. The protein is Large ribosomal subunit protein uL10 of Pyrococcus furiosus (strain ATCC 43587 / DSM 3638 / JCM 8422 / Vc1).